The chain runs to 319 residues: NADH-quinone oxidoreductase subunit H 1 (319 aa).

The next 8 helical transmembrane spans lie at 1–21, 74–94, 107–127, 147–167, 179–199, 238–258, 262–282, and 293–313; these read MIGL…LLVV, FAYI…FGVI, VGVL…VLGA, LAYE…AGSL, VWFV…GVAA, VLLV…GPWL, IWFG…RATL, and FAWK…GIVV.

Belongs to the complex I subunit 1 family. In terms of assembly, NDH-1 is composed of 14 different subunits. Subunits NuoA, H, J, K, L, M, N constitute the membrane sector of the complex.

It is found in the cell inner membrane. It carries out the reaction a quinone + NADH + 5 H(+)(in) = a quinol + NAD(+) + 4 H(+)(out). Its function is as follows. NDH-1 shuttles electrons from NADH, via FMN and iron-sulfur (Fe-S) centers, to quinones in the respiratory chain. The immediate electron acceptor for the enzyme in this species is believed to be ubiquinone. Couples the redox reaction to proton translocation (for every two electrons transferred, four hydrogen ions are translocated across the cytoplasmic membrane), and thus conserves the redox energy in a proton gradient. This subunit may bind ubiquinone. The protein is NADH-quinone oxidoreductase subunit H 1 of Rhodopseudomonas palustris (strain BisB5).